A 454-amino-acid polypeptide reads, in one-letter code: Serine/threonine-protein phosphatase C23G10.1 (454 aa).

Positions 196, 198, 224, and 256 each coordinate Mn(2+). The Proton donor role is filled by H257. Residues H308 and H382 each coordinate Mn(2+).

Belongs to the PPP phosphatase family. PP-1 subfamily. Mn(2+) is required as a cofactor.

The enzyme catalyses O-phospho-L-seryl-[protein] + H2O = L-seryl-[protein] + phosphate. The catalysed reaction is O-phospho-L-threonyl-[protein] + H2O = L-threonyl-[protein] + phosphate. In Caenorhabditis elegans, this protein is Serine/threonine-protein phosphatase C23G10.1.